Here is a 64-residue protein sequence, read N- to C-terminus: Large ribosomal subunit protein bL33 (64 aa).

It belongs to the bacterial ribosomal protein bL33 family.

This chain is Large ribosomal subunit protein bL33, found in Picosynechococcus sp. (strain ATCC 27264 / PCC 7002 / PR-6) (Agmenellum quadruplicatum).